Reading from the N-terminus, the 580-residue chain is MAEKRRPLLGFVGKLPSGTTAGNSGKTHCPLCMGLFKAPRLLPCLHTVCTTCLEQLEPFSVVDIRGGESDTSSEGSVFQELKPRALQPQIGILCPVCDAQVDLPMGGVKALTIDHLAMNDVMLESLRGEGQGLVCDLCSDREVEKRCQTCKANLCRFCCQAHRRQKKTTYHTMVDLKDLKGYSQIGKPILCPAHPAEELRLFCELCDRPVCRDCVVGEHREHPCDFTSNVIHKHGDSVRELLRGTQPHVEALEEALAQIKGTNSAVQERVKAVAADIRTFSEGYIKAIEEHRDKLLKQLEDIRVQKENSLQLQKAQLEQLLADMRTGVEFTEHLLTSGSDLEILITKGVVVERLTKLNKVEYSAHPGVNEKISFSPKQKAGLCRGYEVYGAINTKEVDPAKCVLQGEDLHRAREKQPASFIVLCKDATGESMGRGGDNVQVTVIPNDKKDSPVKTMVHDNKDGTYYVSYTPKEPGTYTVLVCVKEQHVQGSPFTVTVRKRHRSHPGVFHCCTFCSSGGQKTARCACGGTMPGGYLGCGHGHKGHPGRPHWSCCGKFAEKSECTWAGGQSAPRSLLRTVAL.

The RING-type zinc finger occupies 29–98 (CPLCMGLFKA…QIGILCPVCD (70 aa)). 2 consecutive B box-type zinc fingers follow at residues 130–176 (GQGL…MVDL) and 186–227 (GKPI…CDFT). Zn(2+)-binding residues include Cys135, Cys138, Cys158, His162, Cys191, His194, Cys214, and His219. Residues 281 to 335 (SEGYIKAIEEHRDKLLKQLEDIRVQKENSLQLQKAQLEQLLADMRTGVEFTEHLL) adopt a coiled-coil conformation. Residues 394-497 (TKEVDPAKCV…VQGSPFTVTV (104 aa)) form a Filamin repeat.

The protein belongs to the TRIM/RBCC family.

It localises to the cytoplasm. The protein localises to the nucleus. It carries out the reaction S-ubiquitinyl-[E2 ubiquitin-conjugating enzyme]-L-cysteine + [acceptor protein]-L-lysine = [E2 ubiquitin-conjugating enzyme]-L-cysteine + N(6)-ubiquitinyl-[acceptor protein]-L-lysine.. Functionally, E3 ubiquitin-protein ligase that plays a role in the regulation of inflammatory response. Mechanistically, mediates the 'Lys-48'-linked polyubiquitination of TAB2, a regulatory protein of the kinase TAK1, leading to its degradation via the proteasomal pathway and inhibition of the TLR-mediated inflammatory immune response. May act as a transcriptional repressor in mitogen-activated protein kinase signaling pathway. This is E3 ubiquitin-protein ligase TRIM45 (TRIM45) from Bos taurus (Bovine).